The sequence spans 399 residues: uncharacterized protein (399 aa).

The next 5 helical transmembrane spans lie at 26–46, 266–286, 301–321, 324–344, and 358–378; these read LLTIIGIVIGVLAMVSLISLG, VITIFVVGVAAISLLVGAVGI, IGILKALGAETTDILAIFVVE, FLGLFGGIVGLVLGILLAEVI, and AWISWELIVGVLIFSFLVGVI.

This sequence belongs to the ABC-4 integral membrane protein family.

The protein localises to the cell membrane. This is an uncharacterized protein from Methanocaldococcus jannaschii (strain ATCC 43067 / DSM 2661 / JAL-1 / JCM 10045 / NBRC 100440) (Methanococcus jannaschii).